A 123-amino-acid chain; its full sequence is Ribonuclease P protein component (123 aa).

The protein belongs to the RnpA family. Consists of a catalytic RNA component (M1 or rnpB) and a protein subunit.

It carries out the reaction Endonucleolytic cleavage of RNA, removing 5'-extranucleotides from tRNA precursor.. Functionally, RNaseP catalyzes the removal of the 5'-leader sequence from pre-tRNA to produce the mature 5'-terminus. It can also cleave other RNA substrates such as 4.5S RNA. The protein component plays an auxiliary but essential role in vivo by binding to the 5'-leader sequence and broadening the substrate specificity of the ribozyme. This Streptomyces avermitilis (strain ATCC 31267 / DSM 46492 / JCM 5070 / NBRC 14893 / NCIMB 12804 / NRRL 8165 / MA-4680) protein is Ribonuclease P protein component.